A 191-amino-acid polypeptide reads, in one-letter code: dCTP deaminase, dUMP-forming (191 aa).

Residues 101-106 (KSSLGR), D119, 127-129 (TLE), Q148, Y162, and Q174 each bind dCTP. The Proton donor/acceptor role is filled by E129. Residues 163 to 191 (GSAKYGSRYQGQRGPTPSRSYQNFHRTPI) are disordered. A compositionally biased stretch (polar residues) spans 171 to 191 (YQGQRGPTPSRSYQNFHRTPI).

Belongs to the dCTP deaminase family. Homotrimer.

The enzyme catalyses dCTP + 2 H2O = dUMP + NH4(+) + diphosphate. Its pathway is pyrimidine metabolism; dUMP biosynthesis; dUMP from dCTP: step 1/1. In terms of biological role, bifunctional enzyme that catalyzes both the deamination of dCTP to dUTP and the hydrolysis of dUTP to dUMP without releasing the toxic dUTP intermediate. The chain is dCTP deaminase, dUMP-forming from Nocardioides sp. (strain ATCC BAA-499 / JS614).